Here is a 118-residue protein sequence, read N- to C-terminus: Large ribosomal subunit protein bL19 (118 aa).

The protein belongs to the bacterial ribosomal protein bL19 family.

Its function is as follows. This protein is located at the 30S-50S ribosomal subunit interface and may play a role in the structure and function of the aminoacyl-tRNA binding site. This is Large ribosomal subunit protein bL19 (rplS) from Helicobacter pylori (strain J99 / ATCC 700824) (Campylobacter pylori J99).